The following is a 220-amino-acid chain: Large ribosomal subunit protein bL21 (220 aa).

The segment at 109-158 (SKKVAAKPATSEEKAAEEKPAKAKKEAAEKGASPRETKAAPLFSAPEGEP) is disordered. Basic and acidic residues predominate over residues 118 to 146 (TSEEKAAEEKPAKAKKEAAEKGASPRETK).

It belongs to the bacterial ribosomal protein bL21 family. Part of the 50S ribosomal subunit. Contacts protein L20.

This protein binds to 23S rRNA in the presence of protein L20. This is Large ribosomal subunit protein bL21 from Chelativorans sp. (strain BNC1).